A 121-amino-acid polypeptide reads, in one-letter code: Basic phospholipase A2 homolog textilotoxin B chain (121 aa).

Intrachain disulfides connect Cys11–Cys72, Cys27–Cys120, Cys29–Cys45, Cys44–Cys101, Cys51–Cys94, Cys61–Cys87, and Cys80–Cys92.

Belongs to the phospholipase A2 family. Group I subfamily. N49 sub-subfamily. As to quaternary structure, heterohexamer. 2 forms exist: 2 A or 2 B chains, 2 C chains and 2 covalently-linked D chains, and 1 A or 1 B, 1 C, 2 covalently-linked D chains and 2 differentially glycosylated covalently-linked D chains. Textilotoxin was originally described as pentameric. As to expression, expressed by the venom gland.

It is found in the secreted. In terms of biological role, snake venom oligomeric phospholipase A2 that has potent presynaptic neurotoxicity. Chain B is not itself neurotoxic, but it is essential for the neurotoxicity of textilotoxin. Subunit B possesses a very low phospholipase activity. This chain is Basic phospholipase A2 homolog textilotoxin B chain, found in Pseudonaja textilis (Eastern brown snake).